The sequence spans 232 residues: Orotate phosphoribosyltransferase (232 aa).

Residues Arg107, Lys108, Lys111, His113, and 133 to 141 contribute to the 5-phospho-alpha-D-ribose 1-diphosphate site; that span reads EDLTTAGGS. Thr137 contributes to the orotate binding site.

This sequence belongs to the purine/pyrimidine phosphoribosyltransferase family. PyrE subfamily. In terms of assembly, homodimer. Mg(2+) serves as cofactor.

The catalysed reaction is orotidine 5'-phosphate + diphosphate = orotate + 5-phospho-alpha-D-ribose 1-diphosphate. It functions in the pathway pyrimidine metabolism; UMP biosynthesis via de novo pathway; UMP from orotate: step 1/2. In terms of biological role, catalyzes the transfer of a ribosyl phosphate group from 5-phosphoribose 1-diphosphate to orotate, leading to the formation of orotidine monophosphate (OMP). This chain is Orotate phosphoribosyltransferase, found in Sinorhizobium medicae (strain WSM419) (Ensifer medicae).